A 780-amino-acid chain; its full sequence is MAARDRRSEPPQLAEYSCSYAVSRPVYSELAFQQQRERRLPERRTLRDSLARSCSCSRKRAFGALKALLPILDWLPKYRVKEWLLSDIISGVSTGLVGTLQGMAYALLAAVPVQYGLYSAFFPILTYFVFGTSRHISVGPFPVVSLMVGSVVLSMAPDDHFLVPSGNGSTLNTTTLDTGTRDAARVLLASTLTLLVGIIQLVFGGLQIGFIVRYLADPLVGGFTTAAAFQVLVSQLKIVLNVSTKNYNGVLSIIYTLIEIFQNIGDTNIADFIAGLLTIIVCMAVKELNDRFKHKIPVPIPIEVIVTIIATAISYGANLEANYNAGIVKSIPSGFLPPVLPSVGLFSDMLAASFSIAVVAYAIAVSVGKVYATKHDYIIDGNQEFIAFGISNVFSGFFSCFVATTALSRTAVQESTGGKTQVAGLISAVIVMVAIVALGKLLEPLQKSVLAAVVIANLKGMFMQVCDVPRLWKQNKTDAVIWVFTCIMSIILGLDLGLLAGLLFGLLTVVLRVQFPSWNGLGSVPSTDIYKSITHYKNLEEPEGVKILRFSSPIFYGNVDGFKKCVKSTVGFDAIRVYNKRLKALRRIQKLIKKGQLRATKNGIISDVGSSNNAFEPDEDVEEPEELDIPTKEIEIQVDWNSELPVKVNVPKVPIHSLVLDCGAVSFLDVVGVRSLRMIVKEFQRIDVNVYFALLQDDVLEKMEQCGFFDDNIRKDRFFLTVHDAILYLQNQAKSREGQDSLLETITLIQDCKDPLELMEAEINEEELDVQDEAMRRLAS.

At 1 to 87 (MAARDRRSEP…YRVKEWLLSD (87 aa)) the chain is on the cytoplasmic side. Residues 88–108 (IISGVSTGLVGTLQGMAYALL) form a helical membrane-spanning segment. A topological domain (extracellular) is located at residue Ala109. A helical membrane pass occupies residues 110 to 130 (AVPVQYGLYSAFFPILTYFVF). Residues 131-135 (GTSRH) are Cytoplasmic-facing. A helical transmembrane segment spans residues 136 to 156 (ISVGPFPVVSLMVGSVVLSMA). Residues 157–191 (PDDHFLVPSGNGSTLNTTTLDTGTRDAARVLLAST) lie on the Extracellular side of the membrane. The chain crosses the membrane as a helical span at residues 192–212 (LTLLVGIIQLVFGGLQIGFIV). The Cytoplasmic segment spans residues 213–218 (RYLADP). A helical transmembrane segment spans residues 219-239 (LVGGFTTAAAFQVLVSQLKIV). The Extracellular portion of the chain corresponds to 240 to 263 (LNVSTKNYNGVLSIIYTLIEIFQN). A helical transmembrane segment spans residues 264-284 (IGDTNIADFIAGLLTIIVCMA). Topologically, residues 285–295 (VKELNDRFKHK) are cytoplasmic. The chain crosses the membrane as a helical span at residues 296-316 (IPVPIPIEVIVTIIATAISYG). Over 317-344 (ANLEANYNAGIVKSIPSGFLPPVLPSVG) the chain is Extracellular. Residues 345–365 (LFSDMLAASFSIAVVAYAIAV) traverse the membrane as a helical segment. Over 366 to 384 (SVGKVYATKHDYIIDGNQE) the chain is Cytoplasmic. The chain crosses the membrane as a helical span at residues 385 to 405 (FIAFGISNVFSGFFSCFVATT). Residues 406 to 421 (ALSRTAVQESTGGKTQ) are Extracellular-facing. The helical transmembrane segment at 422-442 (VAGLISAVIVMVAIVALGKLL) threads the bilayer. Residues 443-448 (EPLQKS) lie on the Cytoplasmic side of the membrane. Residues 449-469 (VLAAVVIANLKGMFMQVCDVP) traverse the membrane as a helical segment. Topologically, residues 470 to 486 (RLWKQNKTDAVIWVFTC) are extracellular. A helical transmembrane segment spans residues 487 to 507 (IMSIILGLDLGLLAGLLFGLL). At 508 to 780 (TVVLRVQFPS…QDEAMRRLAS (273 aa)) the chain is on the cytoplasmic side. The STAS domain maps to 535 to 729 (HYKNLEEPEG…LTVHDAILYL (195 aa)).

Belongs to the SLC26A/SulP transporter (TC 2.A.53) family. As to expression, highly expressed in the kidney (at protein level).

It localises to the cell membrane. Its subcellular location is the apical cell membrane. The enzyme catalyses chloride(in) = chloride(out). It carries out the reaction iodide(out) = iodide(in). The catalysed reaction is hydrogencarbonate(in) + chloride(out) = hydrogencarbonate(out) + chloride(in). It catalyses the reaction iodide(in) + hydrogencarbonate(out) = iodide(out) + hydrogencarbonate(in). The enzyme catalyses iodide(in) + chloride(out) = iodide(out) + chloride(in). It carries out the reaction formate(in) + chloride(out) = formate(out) + chloride(in). Sodium-independent transporter of chloride and iodide. Mediates electroneutral chloride-bicarbonate and chloride-formate exchange with 1:1 stoichiometry. Mediates electroneutral iodide-chloride and iodide-bicarbonate exchange. The protein is Pendrin (Slc26a4) of Rattus norvegicus (Rat).